An 88-amino-acid polypeptide reads, in one-letter code: Meiosis-expressed gene 1 protein (88 aa).

It belongs to the MEIG1 family. As to quaternary structure, interacts with PACRG. Interacts with MORN3. As to expression, expressed in the testes (at protein level). Expressed in the ovary. Several isoforms have been identified differing in their 5'-untranslated exons. These isoforms show different tissue expression. Some are expressed in various tissues, including lung, liver, brain, testis, oviduct and oocytes. Some are testis-specific.

Functionally, essential for spermiogenesis. This chain is Meiosis-expressed gene 1 protein, found in Mus musculus (Mouse).